The following is a 172-amino-acid chain: Ribosome maturation factor RimM (172 aa).

One can recognise a PRC barrel domain in the interval 96-168 (EGEFYYHQII…RVDVELMEGL (73 aa)).

The protein belongs to the RimM family. In terms of assembly, binds ribosomal protein uS19.

It is found in the cytoplasm. Functionally, an accessory protein needed during the final step in the assembly of 30S ribosomal subunit, possibly for assembly of the head region. Essential for efficient processing of 16S rRNA. May be needed both before and after RbfA during the maturation of 16S rRNA. It has affinity for free ribosomal 30S subunits but not for 70S ribosomes. In Streptococcus pyogenes serotype M6 (strain ATCC BAA-946 / MGAS10394), this protein is Ribosome maturation factor RimM.